Reading from the N-terminus, the 86-residue chain is UPF0367 protein NATL1_01981 (86 aa).

The protein belongs to the UPF0367 family.

The chain is UPF0367 protein NATL1_01981 from Prochlorococcus marinus (strain NATL1A).